The sequence spans 389 residues: Lipid-A-disaccharide synthase (389 aa).

This sequence belongs to the LpxB family.

It carries out the reaction a lipid X + a UDP-2-N,3-O-bis[(3R)-3-hydroxyacyl]-alpha-D-glucosamine = a lipid A disaccharide + UDP + H(+). The protein operates within bacterial outer membrane biogenesis; LPS lipid A biosynthesis. Its function is as follows. Condensation of UDP-2,3-diacylglucosamine and 2,3-diacylglucosamine-1-phosphate to form lipid A disaccharide, a precursor of lipid A, a phosphorylated glycolipid that anchors the lipopolysaccharide to the outer membrane of the cell. The protein is Lipid-A-disaccharide synthase of Paraburkholderia xenovorans (strain LB400).